The primary structure comprises 200 residues: Coiled-coil domain-containing protein 85B (200 aa).

Residues 57-84 (LQGHLLEIRELKVINQRLQEENQELRDL) adopt a coiled-coil conformation. Low complexity predominate over residues 178-188 (DGSSSTGSVGS). Positions 178–200 (DGSSSTGSVGSPDQLHLVCSPDD) are disordered.

Belongs to the CCDC85 family.

Its subcellular location is the nucleus. The protein localises to the cytoplasm. It is found in the cytoskeleton. The protein resides in the microtubule organizing center. It localises to the centrosome. Its subcellular location is the cell junction. The protein localises to the adherens junction. In terms of biological role, functions as a transcriptional repressor. May inhibit the activity of CTNNB1 in a TP53-dependent manner and thus regulate cell growth. May function in adipocyte differentiation, negatively regulating mitotic clonal expansion. Plays a role in cell-cell adhesion and epithelium development through its interaction with proteins of the beta-catenin family. In Danio rerio (Zebrafish), this protein is Coiled-coil domain-containing protein 85B (ccdc85b).